Reading from the N-terminus, the 403-residue chain is Envelope glycoprotein D (403 aa).

A signal peptide spans 1 to 34 (MNRYRYESIFFRYISSTRMILIICLLLGIGDMSA). Residues 35-357 (MGLKKDNSPI…ISTEKKSRTQ (323 aa)) are Virion surface-facing. Residues Asn87 and Asn138 are each glycosylated (N-linked (GlcNAc...) asparagine; by host). Intrachain disulfides connect Cys88/Cys209, Cys127/Cys222, and Cys139/Cys148. N-linked (GlcNAc...) asparagine; by host glycans are attached at residues Asn230 and Asn306. A helical membrane pass occupies residues 358–378 (IIISLVVLCVMFCFIVIGSGI). Over 379 to 403 (WILRKHRKTVMYDRRRPSRRAYSRL) the chain is Intravirion.

This sequence belongs to the herpesviridae glycoprotein D family.

The protein resides in the virion membrane. In terms of biological role, envelope glycoprotein that binds to host cell entry receptors, promoting the virus entry into host cells. May trigger fusion with host membrane, by recruiting the fusion machinery composed of gB and gH/gL. In Gallus gallus (Chicken), this protein is Envelope glycoprotein D (MDV094).